The primary structure comprises 423 residues: 3-phosphoshikimate 1-carboxyvinyltransferase (423 aa).

3 residues coordinate 3-phosphoshikimate: Lys-21, Ser-22, and Arg-26. Lys-21 serves as a coordination point for phosphoenolpyruvate. Phosphoenolpyruvate contacts are provided by Gly-93 and Arg-123. 3-phosphoshikimate contacts are provided by Ser-168, Ser-169, Gln-170, Ser-196, Asp-311, and Lys-338. Gln-170 serves as a coordination point for phosphoenolpyruvate. Asp-311 functions as the Proton acceptor in the catalytic mechanism. Phosphoenolpyruvate-binding residues include Arg-342, Arg-383, and Lys-408.

It belongs to the EPSP synthase family. In terms of assembly, monomer.

The protein resides in the cytoplasm. It carries out the reaction 3-phosphoshikimate + phosphoenolpyruvate = 5-O-(1-carboxyvinyl)-3-phosphoshikimate + phosphate. It participates in metabolic intermediate biosynthesis; chorismate biosynthesis. In terms of biological role, catalyzes the transfer of the enolpyruvyl moiety of phosphoenolpyruvate (PEP) to the 5-hydroxyl of shikimate-3-phosphate (S3P) to produce enolpyruvyl shikimate-3-phosphate and inorganic phosphate. This Methanosphaerula palustris (strain ATCC BAA-1556 / DSM 19958 / E1-9c) protein is 3-phosphoshikimate 1-carboxyvinyltransferase.